We begin with the raw amino-acid sequence, 354 residues long: 3'-hydroxy-N-methyl-(S)-coclaurine 4'-O-methyltransferase 1 (354 aa).

Asp-223 contributes to the S-adenosyl-L-methionine binding site. The active-site Proton acceptor is the His-261.

This sequence belongs to the class I-like SAM-binding methyltransferase superfamily. Cation-independent O-methyltransferase family. COMT subfamily. As to expression, expressed in roots, stems, leaves and flowers. Restricted to sieve elements of the phloem adjacent or proximal to laticifers.

It carries out the reaction (S)-3'-hydroxy-N-methylcoclaurine + S-adenosyl-L-methionine = (S)-reticuline + S-adenosyl-L-homocysteine + H(+). Its pathway is alkaloid biosynthesis; (S)-reticuline biosynthesis; (S)-reticuline from (S)-norcoclaurine: step 4/4. Its function is as follows. Involved in the biosynthesis of benzylisoquinoline alkaloids. Catalyzes the transfer of the methyl group to the 4'-hydroxyl group of 3'-hydroxy-N-methylcoclaurine to form reticuline. Also involved in the papaverine biosynthesis. This is 3'-hydroxy-N-methyl-(S)-coclaurine 4'-O-methyltransferase 1 from Papaver somniferum (Opium poppy).